Here is a 657-residue protein sequence, read N- to C-terminus: THO complex subunit 1 (657 aa).

The residue at position 1 (M1) is an N-acetylmethionine. The residue at position 2 (S2) is a Phosphoserine. T4 is modified (phosphothreonine). K31 participates in a covalent cross-link: Glycyl lysine isopeptide (Lys-Gly) (interchain with G-Cter in SUMO2). N6-acetyllysine is present on K133. A dock domain; interaction with THOC2 region spans residues 133 to 167 (KNYLLRMCNDLLRRLSKSQNTVFCGRIQLFLARLF). Residues 194-222 (QESTLGQKHTEDREEGMDVEEGEMGDEEA) form a disordered region. Acidic residues predominate over residues 206-222 (REEGMDVEEGEMGDEEA). Residues 227–397 (SIPIDYNLYR…WNSWKNEGCP (171 aa)) are dock domain; interaction with THOC2. An N6-acetyllysine modification is found at K300. Residue K408 forms a Glycyl lysine isopeptide (Lys-Gly) (interchain with G-Cter in SUMO2) linkage. Positions 414-430 (RKRTAPEDFLGKGPTKK) match the Nuclear localization signal motif. The disordered stretch occupies residues 533–569 (LPPPSEEIKTGEDEDEEDNDALLKENESPDVRRDKPV). S537 carries the post-translational modification Phosphoserine. T542 is modified (phosphothreonine). The segment covering 553–569 (ALLKENESPDVRRDKPV) has biased composition (basic and acidic residues). Residue S560 is modified to Phosphoserine. Positions 570–653 (TGEQIEVFAN…DLAESLTNDN (84 aa)) constitute a Death domain. A Glycyl lysine isopeptide (Lys-Gly) (interchain with G-Cter in SUMO2) cross-link involves residue K580. K595 participates in a covalent cross-link: Glycyl lysine isopeptide (Lys-Gly) (interchain with G-Cter in SUMO1); alternate. A Glycyl lysine isopeptide (Lys-Gly) (interchain with G-Cter in SUMO2); alternate cross-link involves residue K595.

It belongs to the THOC1 family. In terms of assembly, component of the THO subcomplex, which is composed of THOC1, THOC2, THOC3, THOC5, THOC6 and THOC7. The THO subcomplex interacts with DDX39B to form the THO-DDX39B complex which multimerizes into a 28-subunit tetrameric assembly. Component of the transcription/export (TREX) complex at least composed of ALYREF/THOC4, DDX39B, SARNP/CIP29, CHTOP and the THO subcomplex; in the complex interacts with THOC2, THOC5 and THOC7. TREX seems to have a dynamic structure involving ATP-dependent remodeling. Binds to the hypophosphorylated form of RB1. Interacts with RNA polymerase II. Interacts with LUZP4. Expression is altered specifically during apoptosis and is accompanied by the appearance of novel forms with smaller apparent molecular mass. Post-translationally, polyubiquitinated, leading to proteasomal degradation; probably involves NEDD4. In terms of tissue distribution, ubiquitous. Expressed in various cancer cell lines. Expressed at very low levels in normal breast epithelial cells and highly expressed in breast tumors. Expression is strongly associated with an aggressive phenotype of breast tumors and expression correlates with tumor size and the metastatic state of the tumor progression.

Its subcellular location is the nucleus speckle. The protein resides in the nucleus. The protein localises to the nucleoplasm. It is found in the nucleus matrix. It localises to the cytoplasm. In terms of biological role, component of the THO subcomplex of the TREX complex which is thought to couple mRNA transcription, processing and nuclear export, and which specifically associates with spliced mRNA and not with unspliced pre-mRNA. Required for efficient export of polyadenylated RNA. The THOC1-THOC2-THOC3 core complex alone is sufficient to bind export factor NXF1-NXT1 and promote ATPase activity of DDX39B/UAP56. TREX is recruited to spliced mRNAs by a transcription-independent mechanism, binds to mRNA upstream of the exon-junction complex (EJC) and is recruited in a splicing- and cap-dependent manner to a region near the 5' end of the mRNA where it functions in mRNA export to the cytoplasm via the TAP/NXF1 pathway. Regulates transcriptional elongation of a subset of genes. Involved in genome stability by preventing co-transcriptional R-loop formation. May play a role in hair cell formation, hence may be involved in hearing. Its function is as follows. Participates in an apoptotic pathway which is characterized by activation of caspase-6, increases in the expression of BAK1 and BCL2L1 and activation of NF-kappa-B. This pathway does not require p53/TP53, nor does the presence of p53/TP53 affect the efficiency of cell killing. Activates a G2/M cell cycle checkpoint prior to the onset of apoptosis. Apoptosis is inhibited by association with RB1. Functionally, (Microbial infection) The TREX complex is essential for the export of Kaposi's sarcoma-associated herpesvirus (KSHV) intronless mRNAs and infectious virus production. In Homo sapiens (Human), this protein is THO complex subunit 1 (THOC1).